A 366-amino-acid polypeptide reads, in one-letter code: Ribosomal RNA large subunit methyltransferase M (366 aa).

S-adenosyl-L-methionine contacts are provided by residues Ser188, 221–224 (CPGG), Asp240, Asp260, and Asp277. Lys306 functions as the Proton acceptor in the catalytic mechanism.

The protein belongs to the class I-like SAM-binding methyltransferase superfamily. RNA methyltransferase RlmE family. RlmM subfamily. Monomer.

It localises to the cytoplasm. The catalysed reaction is cytidine(2498) in 23S rRNA + S-adenosyl-L-methionine = 2'-O-methylcytidine(2498) in 23S rRNA + S-adenosyl-L-homocysteine + H(+). Its function is as follows. Catalyzes the 2'-O-methylation at nucleotide C2498 in 23S rRNA. The sequence is that of Ribosomal RNA large subunit methyltransferase M from Shigella dysenteriae serotype 1 (strain Sd197).